The following is a 322-amino-acid chain: Cytochrome c biogenesis protein CcsA (322 aa).

6 helical membrane-spanning segments follow: residues 9–29, 44–64, 143–163, 226–246, 259–276, and 289–309; these read ILTHISFSTISIVITIHLITL, GMIVTFFSITGFLVSRWASSG, MLLSYATLLGGPPLSAAILII, VISLGFTLLTGGILGGAVWAN, ETWAFITWTIFAIYLHSR, and IASIGFLIIWICYFGINLLGI.

This sequence belongs to the CcmF/CycK/Ccl1/NrfE/CcsA family. As to quaternary structure, may interact with Ccs1.

The protein localises to the plastid. It is found in the chloroplast thylakoid membrane. Functionally, required during biogenesis of c-type cytochromes (cytochrome c6 and cytochrome f) at the step of heme attachment. In Triticum aestivum (Wheat), this protein is Cytochrome c biogenesis protein CcsA.